Reading from the N-terminus, the 852-residue chain is Eukaryotic translation initiation factor 3 subunit C (852 aa).

A disordered region spans residues 1 to 90; it reads MSRFFVSGYP…DSDSDDEGRK (90 aa). Acidic residues predominate over residues 14–57; the sequence is SSEEEDLLSSSEEELLSSESEEDNFSSDSEFGNDSDNDSSDSDS. The region spanning 597–772 is the PCI domain; sequence FHMHINLELL…SFVNFTTNDH (176 aa). The span at 798–809 shows a compositional bias: polar residues; it reads TASNGYSRKQPM. Positions 798–852 are disordered; it reads TASNGYSRKQPMQQQQQQQQQQQQQKEQKELLHEENNRFRYANVNANNDEFQTTA. Residues 810-822 are compositionally biased toward low complexity; that stretch reads QQQQQQQQQQQQQ. The segment covering 823 to 835 has biased composition (basic and acidic residues); that stretch reads KEQKELLHEENNR. Over residues 841-852 the composition is skewed to polar residues; that stretch reads VNANNDEFQTTA.

It belongs to the eIF-3 subunit C family. In terms of assembly, component of the eukaryotic translation initiation factor 3 (eIF-3) complex.

It is found in the cytoplasm. Its function is as follows. Component of the eukaryotic translation initiation factor 3 (eIF-3) complex, which is involved in protein synthesis of a specialized repertoire of mRNAs and, together with other initiation factors, stimulates binding of mRNA and methionyl-tRNAi to the 40S ribosome. The eIF-3 complex specifically targets and initiates translation of a subset of mRNAs involved in cell proliferation. The sequence is that of Eukaryotic translation initiation factor 3 subunit C from Debaryomyces hansenii (strain ATCC 36239 / CBS 767 / BCRC 21394 / JCM 1990 / NBRC 0083 / IGC 2968) (Yeast).